We begin with the raw amino-acid sequence, 947 residues long: Protein translocase subunit SecA (947 aa).

Residues Q87, 105–109 (GEGKT), and D525 each bind ATP. The tract at residues 905-928 (PADNADKTARNPNDPSTWGKVGRN) is disordered. Zn(2+) contacts are provided by C931, C933, C942, and H943.

It belongs to the SecA family. In terms of assembly, monomer and homodimer. Part of the essential Sec protein translocation apparatus which comprises SecA, SecYEG and auxiliary proteins SecDF-YajC and YidC. Zn(2+) serves as cofactor.

The protein resides in the cell inner membrane. It localises to the cytoplasm. It carries out the reaction ATP + H2O + cellular proteinSide 1 = ADP + phosphate + cellular proteinSide 2.. Functionally, part of the Sec protein translocase complex. Interacts with the SecYEG preprotein conducting channel. Has a central role in coupling the hydrolysis of ATP to the transfer of proteins into and across the cell membrane, serving both as a receptor for the preprotein-SecB complex and as an ATP-driven molecular motor driving the stepwise translocation of polypeptide chains across the membrane. This is Protein translocase subunit SecA from Rhodopseudomonas palustris (strain BisB18).